The chain runs to 859 residues: Envelope glycoprotein (859 aa).

Residues 1 to 6 constitute a propeptide that is removed on maturation; that stretch reads MVSIAF. Residues 7 to 614 lie on the Extracellular side of the membrane; sequence YGGIPGGIST…KDLWSHIGNW (608 aa). Asn40, Asn112, Asn141, Asn148, Asn186, Asn214, Asn233, Asn244, Asn313, Asn340, Asn368, Asn399, Asn406, and Asn411 each carry an N-linked (GlcNAc...) asparagine; by host glycan. The tract at residues 446-466 is fusion peptide; that stretch reads FGISAIVAAIVAATAIAASAT. N-linked (GlcNAc...) asparagine; by host glycosylation is found at Asn483 and Asn490. The immunosuppression stretch occupies residues 498–513; sequence LIERQIKILYAMILQT. N-linked (GlcNAc...) asparagine; by host glycosylation is found at Asn550 and Asn557. 2 coiled-coil regions span residues 576-624 and 663-699; these read ILTT…SIIK and KKFH…YYKQ. The helical transmembrane segment at 615-635 threads the bilayer; sequence IPGLGASIIKYIVMFLLIYLL. Residues 636 to 859 lie on the Cytoplasmic side of the membrane; it reads LTSSPKILRA…TSHVSMPQYV (224 aa).

In terms of assembly, the mature envelope protein (Env) consists of a trimer of SU-TM heterodimers attached by noncovalent interactions or by a labile interchain disulfide bond. Specific enzymatic cleavages in vivo yield mature proteins. Envelope glycoproteins are synthesized as an inactive precursor that is N-glycosylated and processed likely by host cell furin or by a furin-like protease in the Golgi to yield the mature SU and TM proteins. The cleavage site between SU and TM requires the minimal sequence [KR]-X-[KR]-R.

It localises to the virion membrane. The protein resides in the host cell membrane. The surface protein (SU) attaches the virus to the host cell by binding to its receptor. This interaction triggers the refolding of the transmembrane protein (TM) and is thought to activate its fusogenic potential by unmasking its fusion peptide. Fusion occurs at the host cell plasma membrane. In terms of biological role, the transmembrane protein (TM) acts as a class I viral fusion protein. Under the current model, the protein has at least 3 conformational states: pre-fusion native state, pre-hairpin intermediate state, and post-fusion hairpin state. During viral and target cell membrane fusion, the coiled coil regions (heptad repeats) assume a trimer-of-hairpins structure, positioning the fusion peptide in close proximity to the C-terminal region of the ectodomain. The formation of this structure appears to drive apposition and subsequent fusion of viral and target cell membranes. Membranes fusion leads to delivery of the nucleocapsid into the cytoplasm. The protein is Envelope glycoprotein (env) of Equus asinus (Donkey).